A 281-amino-acid polypeptide reads, in one-letter code: MKQFSAKYALILLATAGQALAASTQGISEDLYNRLVEMATISQAAYADLCNIPSTIIKGEKIYNAQTDINGWILRDDTSKEIITVFRGTGSDTNLQLDTNYTLTPFDTLPQCNDCEVHGGYYIGWISVQDQVESLVKQQASQYPDYALTVTGHSLGASMAALTAAQLSATYDNVRLYTFGEPRSGNQAFASYMNDAFQVSSPETTQYFRVTHSNDGIPNLPPAEQGYAHGGVEYWSVDPYSAQNTFVCTGDEVQCCEAQGGQGVNDAHTTYFGMTSGACTW.

A signal peptide spans 1-21 (MKQFSAKYALILLATAGQALA). Cystine bridges form between Cys50–Cys279, Cys112–Cys115, and Cys248–Cys255. Asp98 contacts substrate. A glycan (N-linked (GlcNAc...) asparagine) is linked at Asn100. Tyr101 contacts substrate. The active-site Nucleophile is the Ser154. Asp215 acts as the Charge relay system in catalysis. Residue His268 coordinates substrate. The active-site Charge relay system is His268.

The protein belongs to the AB hydrolase superfamily. FaeA family.

The protein localises to the secreted. It carries out the reaction feruloyl-polysaccharide + H2O = ferulate + polysaccharide.. Its function is as follows. Involved in degradation of plant cell walls. Hydrolyzes the feruloyl-arabinose ester bond in arabinoxylans, and the feruloyl-galactose ester bond in pectin. The chain is Probable feruloyl esterase A (faeA) from Aspergillus niger (strain ATCC MYA-4892 / CBS 513.88 / FGSC A1513).